Here is a 240-residue protein sequence, read N- to C-terminus: NDR1/HIN1-like protein 2 (240 aa).

Residues 57-77 (NILIAVAVILGVAALILWLIF) form a helical membrane-spanning segment. N-linked (GlcNAc...) asparagine glycosylation is found at Asn109, Asn141, Asn151, and Asn223.

As to expression, expressed at low levels in roots, rosette leaves, cauline leaves, stems, flowers and siliques.

The protein resides in the cell membrane. Functionally, may play a role in plant immunity. This is NDR1/HIN1-like protein 2 from Arabidopsis thaliana (Mouse-ear cress).